The sequence spans 1610 residues: NHS-like protein 1 (1610 aa).

Serine 24 carries the phosphoserine modification. Positions 145–169 are disordered; sequence SPFCDDYQDEDEETDQKCSLSSSEE. Phosphoserine occurs at positions 198 and 328. The span at 433-448 shows a compositional bias: polar residues; the sequence is TAQSAGQRESKSSGSS. Disordered stretches follow at residues 433–477 and 531–602; these read TAQS…HWNE and PAHP…DAGS. Serine 568 bears the Phosphoserine mark. Positions 578 to 594 are enriched in polar residues; that stretch reads GYSTPTSNMSSCSLDQT. A Phosphoserine modification is found at serine 639. Polar residues predominate over residues 649-667; it reads QKNQGDRSNYQDKSLSRNI. Disordered regions lie at residues 649 to 693, 715 to 778, 791 to 981, 997 to 1535, and 1566 to 1610; these read QKNQ…KKSS, SLPG…SVKS, TGMQ…PPPE, PRPA…GEGE, and EGGL…SEES. A compositionally biased stretch (low complexity) spans 715 to 730; that stretch reads SLPGKSGSSPSQSPCS. 3 stretches are compositionally biased toward polar residues: residues 740–760, 767–778, and 851–865; these read SRSQ…TPNV, TPSQSDTSSVKS, and SPSS…TPTA. Over residues 895 to 928 the composition is skewed to low complexity; sequence SLISSVSISSSSTSLSSSTSTEGSGTMKKLDPAV. Pro residues-rich tracts occupy residues 929 to 946 and 970 to 981; these read GSPP…PFPC and PHSPVFPPPPPE. Over residues 1001–1011 the composition is skewed to low complexity; sequence LSPILPDSPVS. Residues 1012–1031 are compositionally biased toward pro residues; the sequence is LPLPPPLLPSSEPPPAPPLD. A compositionally biased stretch (polar residues) spans 1041–1053; it reads PFTNSGQPESSRG. Phosphoserine is present on serine 1089. Residues 1122-1153 show a composition bias toward polar residues; sequence SRNSTNEMESESQPASVTSSLPTPAKSSSQGD. Serine 1167 carries the phosphoserine modification. Positions 1180–1193 are enriched in low complexity; the sequence is PSPSTTPLPDSSPS. Serine 1233 bears the Phosphoserine mark. 2 stretches are compositionally biased toward basic and acidic residues: residues 1240–1249 and 1373–1383; these read GSVHSREAKE and GRRDSDDDHSR. 2 positions are modified to phosphoserine: serine 1386 and serine 1388. Threonine 1392 is modified (phosphothreonine). A compositionally biased stretch (polar residues) spans 1405 to 1422; sequence QVGSIQRSIRKSSTSSDN. The span at 1447–1460 shows a compositional bias: basic and acidic residues; the sequence is KNTDPRFQRSRSEP. Low complexity-rich tracts occupy residues 1461-1474 and 1504-1516; these read SPDA…CSPS and SRTP…SRYS.

It belongs to the NHS family. As to expression, widely expressed. Expressed in adult and fetal brain, fetal eyes, adult lens, kidney, liver and intestine.

This is NHS-like protein 1 (NHSL1) from Homo sapiens (Human).